We begin with the raw amino-acid sequence, 868 residues long: E3 ubiquitin-protein ligase TRIM71 (868 aa).

A2 bears the N-acetylalanine mark. An RING-type zinc finger spans residues 12–89 (CLLCKEMCGS…PLKLRCPVCD (78 aa)). Positions 26–41 (SSNSSASSSSSQTSTS) are enriched in low complexity. 2 disordered regions span residues 26-50 (SSNS…GGPG) and 121-186 (ADEP…GSPS). The segment covering 142-153 (SNHRHHAHHAHP) has biased composition (basic residues). A compositionally biased stretch (pro residues) spans 159–176 (APPPPLPPAPPPPAPPRS). Over residues 177–186 (APGGPAGSPS) the composition is skewed to low complexity. The B box-type 1; atypical zinc finger occupies 191–238 (RRPHGCSSCDEGNAASSRCLDCQEHLCDNCVRAHQRVRLTKDHYIERG). The B box-type 2 zinc finger occupies 273–314 (ERLGFCQHHDDEVLHLYCDTCSVPICRECTVGRHGGHSFVYL). Positions 278, 281, 301, and 306 each coordinate Zn(2+). Residues 391–427 (QVKAKSLYLQVEKLRQNLNKLESTISAVQQVLEEGRA) adopt a coiled-coil conformation. Residues 479 to 580 (SSGAFAPLTK…IENSPFKVVV (102 aa)) form a Filamin repeat. 6 NHL repeats span residues 593-636 (GLSF…FKPC), 640-683 (HHKF…FTFE), 687-730 (LLKF…FGPD), 734-777 (LNKY…IHPD), 781-824 (ARFL…FESN), and 828-868 (LCKF…ILIF).

It belongs to the TRIM/RBCC family. Interacts (via NHL repeats) with AGO2; the interaction increases in presence of RNA. Interacts with HSP90AA1. Interacts (via NHL repeats) with MOV10, PABPC1, PUM1, PUM2, STAU2, XRN1 and XRN2 in an RNA-dependent manner. Interacts with SHCBP1; leading to enhance its stability. Post-translationally, autoubiquitinated.

The protein localises to the cytoplasm. The protein resides in the P-body. It catalyses the reaction S-ubiquitinyl-[E2 ubiquitin-conjugating enzyme]-L-cysteine + [acceptor protein]-L-lysine = [E2 ubiquitin-conjugating enzyme]-L-cysteine + N(6)-ubiquitinyl-[acceptor protein]-L-lysine.. The protein operates within protein modification; protein ubiquitination. In terms of biological role, E3 ubiquitin-protein ligase that cooperates with the microRNAs (miRNAs) machinery and promotes embryonic stem cells proliferation and maintenance. Binds to miRNAs and associates with AGO2, participating in post-transcriptional repression of transcripts such as CDKN1A. In addition, participates in post-transcriptional mRNA repression in a miRNA independent mechanism. Facilitates the G1-S transition to promote rapid embryonic stem cell self-renewal by repressing CDKN1A expression. Required to maintain proliferation and prevent premature differentiation of neural progenitor cells during early neural development: positively regulates FGF signaling by controlling the stability of SHCBP1. Specific regulator of miRNA biogenesis. Binds to miRNA MIR29A hairpin and postranscriptionally modulates MIR29A levels, which indirectly regulates TET proteins expression. The sequence is that of E3 ubiquitin-protein ligase TRIM71 (TRIM71) from Bos taurus (Bovine).